Here is a 77-residue protein sequence, read N- to C-terminus: Putative snRNP Sm-like protein (77 aa).

The 73-residue stretch at Arg4–Gly76 folds into the Sm domain.

It belongs to the snRNP Sm proteins family.

The chain is Putative snRNP Sm-like protein from Archaeoglobus fulgidus (strain ATCC 49558 / DSM 4304 / JCM 9628 / NBRC 100126 / VC-16).